The following is a 346-amino-acid chain: Phosphate acyltransferase (346 aa).

Belongs to the PlsX family. In terms of assembly, homodimer. Probably interacts with PlsY.

The protein resides in the cytoplasm. It carries out the reaction a fatty acyl-[ACP] + phosphate = an acyl phosphate + holo-[ACP]. Its pathway is lipid metabolism; phospholipid metabolism. Its function is as follows. Catalyzes the reversible formation of acyl-phosphate (acyl-PO(4)) from acyl-[acyl-carrier-protein] (acyl-ACP). This enzyme utilizes acyl-ACP as fatty acyl donor, but not acyl-CoA. This chain is Phosphate acyltransferase, found in Crocosphaera subtropica (strain ATCC 51142 / BH68) (Cyanothece sp. (strain ATCC 51142)).